The primary structure comprises 206 residues: dCTP deaminase, dUMP-forming (206 aa).

DCTP is bound by residues 117 to 122 (RSSFGR), Asp135, 143 to 145 (TLE), Gln163, Tyr177, Lys184, and Gln188. Glu145 serves as the catalytic Proton donor/acceptor.

Belongs to the dCTP deaminase family. In terms of assembly, homotrimer.

It carries out the reaction dCTP + 2 H2O = dUMP + NH4(+) + diphosphate. Its pathway is pyrimidine metabolism; dUMP biosynthesis; dUMP from dCTP: step 1/1. In terms of biological role, bifunctional enzyme that catalyzes both the deamination of dCTP to dUTP and the hydrolysis of dUTP to dUMP without releasing the toxic dUTP intermediate. This Methanococcus maripaludis (strain C5 / ATCC BAA-1333) protein is dCTP deaminase, dUMP-forming.